A 208-amino-acid chain; its full sequence is Small ribosomal subunit protein uS4 (208 aa).

The tract at residues 24–52 (GVKPFDVKTKKANKAPGQHGQARGGKQSE) is disordered. The 63-residue stretch at 98-160 (SRLDNVVYRM…AKQQLRIKNA (63 aa)) folds into the S4 RNA-binding domain.

Belongs to the universal ribosomal protein uS4 family. In terms of assembly, part of the 30S ribosomal subunit. Contacts protein S5. The interaction surface between S4 and S5 is involved in control of translational fidelity.

Functionally, one of the primary rRNA binding proteins, it binds directly to 16S rRNA where it nucleates assembly of the body of the 30S subunit. In terms of biological role, with S5 and S12 plays an important role in translational accuracy. The protein is Small ribosomal subunit protein uS4 of Acinetobacter baumannii (strain ATCC 17978 / DSM 105126 / CIP 53.77 / LMG 1025 / NCDC KC755 / 5377).